A 349-amino-acid chain; its full sequence is Single-stranded TG1-3 DNA-binding protein (349 aa).

Positions 45–127 (FRVFVGRLST…REIVVQKARP (83 aa)) constitute an RRM 1 domain. 2 disordered regions span residues 121–208 (VVQK…PNSI) and 298–349 (EDKQ…AITA). Serine 152 is modified (phosphoserine). Over residues 168-179 (ANTATAPSSNEA) the composition is skewed to polar residues. The span at 181-191 (GVDKKQNEIKG) shows a compositional bias: basic and acidic residues. Residues 206 to 296 (NSIYVSGLSV…LTLVVKSAVF (91 aa)) enclose the RRM 2 domain. 2 stretches are compositionally biased toward basic and acidic residues: residues 298-310 (EDKQNDENEKNEN) and 327-340 (TEPKASEVDSEEKS).

The protein resides in the cytoplasm. It is found in the nucleus. It localises to the chromosome. Its subcellular location is the telomere. Its function is as follows. Binds single-stranded telomeric sequences of the type (TG[1-3])n in vitro. Has a role in meiosis. This is Single-stranded TG1-3 DNA-binding protein (tcg1) from Schizosaccharomyces pombe (strain 972 / ATCC 24843) (Fission yeast).